The following is a 199-amino-acid chain: Prolactin (199 aa).

Residues Cys-4 and Cys-11 are joined by a disulfide bond. A phosphoserine mark is found at Ser-26, Ser-34, and Ser-90. 2 disulfides stabilise this stretch: Cys-58–Cys-174 and Cys-191–Cys-199.

Belongs to the somatotropin/prolactin family. As to quaternary structure, interacts with PRLR.

The protein localises to the secreted. In terms of biological role, prolactin acts primarily on the mammary gland by promoting lactation. This Loxodonta africana (African elephant) protein is Prolactin (PRL).